Consider the following 4660-residue polypeptide: Low-density lipoprotein receptor-related protein 2 (4660 aa).

A signal peptide spans 1-25 (MERGAAAAAWMLLLAIAACLEPVSS). Topologically, residues 26 to 4425 (QECGSGNFRC…LSRGIPPGTT (4400 aa)) are extracellular. LDL-receptor class A domains are found at residues 27–63 (ECGSGNFRCDNGYCIPASWRCDGTRDCLDDTDEIGCP), 66–104 (SCESGLFLCPAEGTCIPSSWVCDEDKDCSDGADEQQNCA), 107–143 (TCSAQQMTCSNGQCIPSEYRCDHVSDCPDGSDERNCH), 141–180 (NCHYPTCDQLTCANGACYNTSQRCDQKVDCRDSSDEANCT), 182–218 (LCSQKEFECGSGECILRAYVCDHDNDCEDNSDERNCN), and 221–257 (TCGGHQFTCSNGQCINQNWVCDGDDDCQDSGDEDGCE). Cystine bridges form between Cys-28–Cys-40, Cys-35–Cys-53, Cys-47–Cys-62, Cys-67–Cys-80, Cys-74–Cys-93, Cys-87–Cys-103, Cys-108–Cys-120, Cys-115–Cys-133, Cys-127–Cys-142, Cys-142–Cys-157, Cys-152–Cys-170, Cys-164–Cys-179, Cys-183–Cys-195, Cys-190–Cys-208, Cys-202–Cys-217, Cys-222–Cys-234, Cys-229–Cys-247, and Cys-241–Cys-256. Asn-159 and Asn-178 each carry an N-linked (GlcNAc...) asparagine glycan. N-linked (GlcNAc...) asparagine glycosylation is present at Asn-259. The 44-residue stretch at 264 to 307 (RCYPREWACPGSGRCISIDKVCDGVPDCPEGDDENNVTSGRTCG) folds into the LDL-receptor class A 7 domain. Disulfide bonds link Cys-265–Cys-278, Cys-272–Cys-291, and Cys-285–Cys-306. Asn-299 and Asn-340 each carry an N-linked (GlcNAc...) asparagine glycan. Residues 347–382 (DFDDCQIWGICDQKCENRQGRHQCLCEEGYILERGQ) form the EGF-like 1; calcium-binding domain. 2 disulfides stabilise this stretch: Cys-351-Cys-361 and Cys-357-Cys-370. 4 LDL-receptor class B repeats span residues 435–477 (HRVF…DWIN), 478–520 (NKLY…DPTV), 521–567 (GYLF…DLVS), and 568–612 (KRVY…FEEH). An N-linked (GlcNAc...) asparagine glycan is attached at Asn-462. Asn-657 carries an N-linked (GlcNAc...) asparagine glycan. LDL-receptor class B repeat units follow at residues 752–794 (STVF…DWIS), 795–836 (RNLY…HPTA), 837–880 (GYMF…DWSA), and 881–924 (SRLY…FKDN). An N-linked (GlcNAc...) asparagine glycan is attached at Asn-865. In terms of domain architecture, LDL-receptor class A 8 spans 1024–1060 (QCGSLSFPCNNGKCVPSFFRCDGVDDCHDNSDEHQCG). Disulfide bonds link Cys-1025–Cys-1037, Cys-1032–Cys-1050, and Cys-1044–Cys-1059. An N-linked (GlcNAc...) asparagine glycan is attached at Asn-1063. LDL-receptor class A domains follow at residues 1065-1102 (TCSPSAFACVRGGQCIPGQWHCDRQNDCLDGSDEQNCP), 1109-1145 (TCPSTSFTCDNHVCIPKDWVCDTDNDCSDGSDEKNCQ), 1149-1185 (TCQPTQFRCPDHRCISPLYVCDGDKDCADGSDEAGCV), 1187-1224 (NCTSAQFKCADGSSCINSRYRCDGVYDCRDNSDEAGCP), 1230-1268 (MCHPDEFQCQGDGTCIPNTWECDGHPDCIHGSDEHTGCV), 1271-1307 (TCSPTHFLCDNGNCIYKAWICDGDNDCRDMSDEKDCP), and 1312-1350 (HCPSTQWQCPGYSTCINLSALCDGVFDCPNGTDESPLCN). 9 disulfides stabilise this stretch: Cys-1066–Cys-1079, Cys-1073–Cys-1092, Cys-1086–Cys-1101, Cys-1110–Cys-1122, Cys-1117–Cys-1135, Cys-1129–Cys-1144, Cys-1150–Cys-1162, Cys-1157–Cys-1175, and Cys-1169–Cys-1184. Residues Trp-1127, Asp-1130, Asp-1132, Asp-1134, Asp-1140, and Glu-1141 each coordinate Ca(2+). A glycan (N-linked (GlcNAc...) asparagine) is linked at Asn-1187. Intrachain disulfides connect Cys-1188–Cys-1201, Cys-1195–Cys-1214, Cys-1208–Cys-1223, Cys-1231–Cys-1244, Cys-1238–Cys-1257, Cys-1251–Cys-1267, Cys-1272–Cys-1284, Cys-1279–Cys-1297, Cys-1291–Cys-1306, Cys-1313–Cys-1326, Cys-1320–Cys-1339, Cys-1333–Cys-1349, Cys-1354–Cys-1365, Cys-1361–Cys-1374, Cys-1376–Cys-1389, Cys-1395–Cys-1405, Cys-1401–Cys-1414, and Cys-1416–Cys-1429. Ca(2+)-binding residues include Tyr-1206, Asp-1209, Val-1211, Asp-1213, Asp-1219, and Glu-1220. 2 N-linked (GlcNAc...) asparagine glycosylation sites follow: Asn-1328 and Asn-1341. In terms of domain architecture, EGF-like 2 spans 1350 to 1390 (NQDSCSHFNGGCTHQCMQGPFGATCLCPLGYQLANDTKTCE). The N-linked (GlcNAc...) asparagine glycan is linked to Asn-1384. Residues 1391 to 1430 (DINECDIPGFCSQHCVNMRGSFRCACDPEYTLESDGRTCK) enclose the EGF-like 3; calcium-binding domain. Asn-1451, Asn-1497, and Asn-1551 each carry an N-linked (GlcNAc...) asparagine glycan. LDL-receptor class B repeat units lie at residues 1479-1521 (GRVF…DWIG), 1522-1564 (RNLY…DPRM), 1567-1610 (NVMF…DYPN), 1611-1655 (RLIY…FEDF), and 1656-1696 (VYWT…IHPS). N-linked (GlcNAc...) asparagine glycosylation is found at Asn-1676, Asn-1733, and Asn-1811. LDL-receptor class B repeat units lie at residues 1791–1833 (QFIY…DWVS), 1834–1883 (RNIY…DPAR), 1884–1931 (GKLY…DIQE), 1932–1973 (QKLY…YGSF), 1974–2014 (LYYS…YHRR), 2108–2157 (GFIY…DWAA), 2158–2202 (GNLY…DPKH), 2203–2246 (RYLF…DHDT), and 2247–2290 (GYIY…FGES). 3 N-linked (GlcNAc...) asparagine glycosylation sites follow: Asn-2134, Asn-2178, and Asn-2225. The N-linked (GlcNAc...) asparagine glycan is linked to Asn-2396. LDL-receptor class B repeat units lie at residues 2432 to 2478 (NRIF…DWIN), 2479 to 2519 (RRIY…DPCR), 2520 to 2563 (GYMY…DLET), 2564 to 2605 (DLLY…YGQY), and 2606 to 2647 (IYWT…VVKT). 2 N-linked (GlcNAc...) asparagine glycosylation sites follow: Asn-2488 and Asn-2548. LDL-receptor class A domains are found at residues 2700–2738 (RCNQLQFTCLNGHCINQDWKCDNDNDCGDGSDELPTVCA), 2741–2777 (TCRSTAFTCGNGRCVPYHYRCDYYNDCGDNSDEAGCL), 2780–2819 (NCNSTTEFTCSNGRCIPLSYVCNGINNCHDNDTSDEKNCP), 2822–2861 (TCPPDFTKCQTTNICVPRAFLCDGDNDCGDGSDENPIYCA), 2864–2902 (TCRSNEFQCLSPQRCIPSYWFCDGEADCADGSDEPDTCG), 2907–2946 (TCRASQFQCDNGRCISGNWVCDGDNDCGDMSDEDQRHHCE), 2949–2991 (NCSS…QNCT), 2994–3030 (TCSAGEFSCANGRCVRQSFRCDRRNDCGDYSDERGCS), 3033–3071 (PCHANQFTCQNGRCIPRFFVCDEDNDCGDGSDEQEHLCH), and 3076–3112 (TCPLHQFRCDNGHCIEMGRVCNHVDDCSDNSDEKGCG). Disulfide bonds link Cys-2701/Cys-2713, Cys-2708/Cys-2726, Cys-2720/Cys-2737, Cys-2742/Cys-2754, Cys-2749/Cys-2767, Cys-2761/Cys-2776, Cys-2781/Cys-2794, Cys-2789/Cys-2807, Cys-2801/Cys-2818, Cys-2823/Cys-2836, Cys-2830/Cys-2849, Cys-2843/Cys-2860, Cys-2865/Cys-2878, Cys-2872/Cys-2891, Cys-2885/Cys-2901, Cys-2908/Cys-2920, Cys-2915/Cys-2933, and Cys-2927/Cys-2945. Asn-2782 carries N-linked (GlcNAc...) asparagine glycosylation. A glycan (N-linked (GlcNAc...) asparagine) is linked at Asn-2810. Asn-2949 is a glycosylation site (N-linked (GlcNAc...) asparagine). Intrachain disulfides connect Cys-2950/Cys-2967, Cys-2957/Cys-2980, Cys-2974/Cys-2990, Cys-2995/Cys-3007, Cys-3002/Cys-3020, Cys-3014/Cys-3029, Cys-3034/Cys-3046, Cys-3041/Cys-3059, Cys-3053/Cys-3070, Cys-3077/Cys-3089, Cys-3084/Cys-3102, Cys-3096/Cys-3111, Cys-3116/Cys-3128, Cys-3124/Cys-3137, Cys-3139/Cys-3152, Cys-3158/Cys-3169, Cys-3165/Cys-3178, and Cys-3180/Cys-3193. Residue Asn-2989 is glycosylated (N-linked (GlcNAc...) asparagine). The EGF-like 4 domain maps to 3112–3153 (GINECLDSSISRCDHNCTDTITSFYCSCLPGYKLMSDKRSCV). N-linked (GlcNAc...) asparagine glycosylation occurs at Asn-3127. The 41-residue stretch at 3154 to 3194 (DIDECKESPQLCSQKCENVVGSYICKCAPGYIREPDGKSCR) folds into the EGF-like 5; calcium-binding domain. N-linked (GlcNAc...) asparagine glycosylation is found at Asn-3213, Asn-3259, Asn-3317, and Asn-3357. LDL-receptor class B repeat units lie at residues 3241-3283 (KRLY…DWVS), 3284-3326 (RKLY…EHPR), 3335-3378 (GHVY…DYTN), 3379-3421 (DLLY…FEDT), and 3422-3462 (VFWT…YHPY). N-linked (GlcNAc...) asparagine glycosylation is present at Asn-3448. 8 LDL-receptor class A domains span residues 3513–3551 (MCSSTQFLCGNNEKCIPIWWKCDGQKDCSDGSDEPDLCP), 3554–3592 (FCRLGQFQCRDGNCTSPQALCNARQDCADGSDEDRVLCE), 3595–3633 (RCESNEWQCANKRCIPQSWQCDSVNDCLDNSDEDTSHCA), 3636–3674 (TCRPGQFKCNNGRCIPQSWKCDVDNDCGDYSDEPIDECT), 3679–3717 (NCDNHTEFSCKTNYRCIPQWAVCNGFDDCRDNSDEQGCE), 3720–3757 (PCHPSGDFRCANHHCIPLRWKCDGTDDCGDNSDEENCV), 3760–3796 (ECSESEFRCADQQCIPSRWVCDQENDCGDNSDERDCE), and 3799–3835 (TCHPEHFQCTSGHCVPKALACDGRADCLDASDESACP). 24 cysteine pairs are disulfide-bonded: Cys-3514–Cys-3527, Cys-3521–Cys-3540, Cys-3534–Cys-3550, Cys-3555–Cys-3567, Cys-3562–Cys-3580, Cys-3574–Cys-3591, Cys-3596–Cys-3608, Cys-3603–Cys-3621, Cys-3615–Cys-3632, Cys-3637–Cys-3649, Cys-3644–Cys-3662, Cys-3656–Cys-3673, Cys-3680–Cys-3694, Cys-3688–Cys-3707, Cys-3701–Cys-3716, Cys-3721–Cys-3734, Cys-3729–Cys-3747, Cys-3741–Cys-3756, Cys-3761–Cys-3773, Cys-3768–Cys-3786, Cys-3780–Cys-3795, Cys-3800–Cys-3812, Cys-3807–Cys-3825, and Cys-3819–Cys-3834. Asn-3566 is a glycosylation site (N-linked (GlcNAc...) asparagine). N-linked (GlcNAc...) asparagine glycosylation occurs at Asn-3682. Asn-3840 is a glycosylation site (N-linked (GlcNAc...) asparagine). 3 consecutive LDL-receptor class A domains span residues 3843 to 3881 (YCPAAMFECKNHVCIQSFWICDGENDCVDGSDEEIHLCF), 3884 to 3923 (PCESPQRFRCDNSRCVYGHQLCNGVDDCGDGSDEKEEHCR), and 3929 to 3965 (PCTDTEYKCSNGNCISQHYVCDNVNDCGDLSDETGCN). 9 disulfide bridges follow: Cys-3844–Cys-3856, Cys-3851–Cys-3869, Cys-3863–Cys-3880, Cys-3885–Cys-3898, Cys-3893–Cys-3911, Cys-3905–Cys-3922, Cys-3930–Cys-3942, Cys-3937–Cys-3955, and Cys-3949–Cys-3964. The EGF-like 6 domain maps to 3968–4003 (DNRTCAENICEQNCTQLSSGGFICSCRPGFKPSTSD). N-linked (GlcNAc...) asparagine glycosylation is found at Asn-3969 and Asn-3980. 5 cysteine pairs are disulfide-bonded: Cys-3972–Cys-3981, Cys-3977–Cys-3991, Cys-4013–Cys-4023, Cys-4019–Cys-4032, and Cys-4034–Cys-4049. Positions 4009–4050 (DINECEEFGICPQSCRNSKGSYECFCVDGFKSMSTHYGERCA) constitute an EGF-like 7; calcium-binding domain. Asn-4070 carries an N-linked (GlcNAc...) asparagine glycan. LDL-receptor class B repeat units lie at residues 4156 to 4198 (RHIY…NPKL), 4199 to 4242 (GLMF…DYLN), and 4244 to 4285 (DRVY…FEDK). Asn-4329 carries an N-linked (GlcNAc...) asparagine glycan. One can recognise an EGF-like 8 domain in the interval 4379–4413 (MPPPCRCMHGGNCYFDENELPKCKCSSGYSGEYCE). 3 disulfide bridges follow: Cys-4383/Cys-4391, Cys-4385/Cys-4401, and Cys-4403/Cys-4412. Residues 4426-4446 (MAVLLTFVIVIIVGALVLVGL) traverse the membrane as a helical segment. Topologically, residues 4447–4660 (FHYRKTGSLL…ANLVKEDSDV (214 aa)) are cytoplasmic. Residues 4454–4463 (SLLPTLPKLP) carry the SH3-binding motif. Positions 4457–4462 (PTLPKL) match the PxLPxI/L motif 1; mediates interaction with ANKRA2 motif. Residues 4460 to 4465 (PKLPSL) carry the PxLPxI/L motif 2; mediates interaction with ANKRA2 motif. 2 positions are modified to phosphoserine: Ser-4464 and Ser-4467. Residues 4522–4527 (FENPMY) carry the Endocytosis signal motif. The segment at 4559 to 4582 (NYGRPIDPSEIVPEPKPASPGADE) is disordered. Ser-4577 carries the post-translational modification Phosphoserine. The interval 4597–4610 (QTTNFENPIYAEMD) is interaction with DAB2. The NPXY motif motif lies at 4603–4606 (NPIY). The SH2-binding signature appears at 4606-4609 (YAEM). A disordered region spans residues 4617 to 4660 (VAVAPPPSPSLPAKASKRNLTPGYTATEDTFKDTANLVKEDSDV). The SH3-binding motif lies at 4619 to 4630 (VAPPPSPSLPAK). Ser-4624 bears the Phosphoserine mark. Positions 4634–4644 (RNLTPGYTATE) are enriched in polar residues. A Phosphothreonine modification is found at Thr-4637. Ser-4658 carries the phosphoserine modification.

Belongs to the LDLR family. In terms of assembly, binds plasminogen, extracellular matrix components, plasminogen activator-plasminogen activator inhibitor type I complex, apolipoprotein E-enriched beta-VLDL, lipoprotein lipase, lactoferrin, CLU/clusterin and calcium. Forms a multimeric complex together with LRPAP1. Interacts (via PxLPxI/L motif) with ANKRA2 (via ankyrin repeats). Interacts with LRP2BP. Interacts (via NPXY motif) with DAB2; the interaction is not affected by tyrosine phosphorylation of the NPXY motif. Interacts with MB. Interacts with BMP4. Interacts with the Sonic hedgehog protein N-product which is the active product of SHH. Interacts with CST3 in a calcium-dependent manner. Interacts with the vitamin-D binding protein GC/DBP. Interacts with sex hormone-binding protein SHBG. Interacts with angiotensin-2. Also interacts with angiotensin 1-7. Interacts with APOM. Interacts with selenoprotein SEPP1. Interacts with LEP. Interacts with ALB. Interacts with the antiapoptotic protein BIRC5/survivin. Interacts with matrix metalloproteinase MMP2 in complex with metalloproteinase inhibitor TIMP1. In neurons, forms a trimeric complex with APP and APPB1/FE65. Interacts with LDLRAP1/ARH; mediates trafficking of LRP2 to the endocytic recycling compartment. Does not interact with beta-amyloid protein 40 alone but interacts with the complex composed of beta-amyloid protein 40 and CLU/APOJ. Interacts with MDK. In terms of processing, a fraction undergoes proteolytic cleavage of the extracellular domain at the cell membrane to generate a cytoplasmic tail fragment. This is internalized into the early endosome from where it trafficks in an LDLRAP1/ARH-dependent manner to the endocytic recycling compartment (ERC). In the ERC, it is further cleaved by gamma-secretase to release a fragment which translocates to the nucleus and mediates transcriptional repression. Post-translationally, N-glycosylation is required for ligand binding. In terms of tissue distribution, in the inner ear, expressed in the lumen of the endolymphatic sac where it localizes to macrophage-like cells as well as to mitochondria-rich and ribosome-rich epithelial cells (at protein level). In the inner ear, expressed in marginal cells of the stria vascularis, epithelial cells at the spiral prominence, epithelial cells of Reissner's membrane facing the cochlear duct, and Kolliker's organ (at protein level). Expressed in the choroid plexus epithelium in the brain (at protein level). In the brain, also expressed in astrocytes (at protein level). Expression also detected in epithelial cells of the kidney glomerulus and proximal tubule, lung, epididymis and yolk sac.

It is found in the apical cell membrane. Its subcellular location is the endosome lumen. The protein resides in the membrane. The protein localises to the clathrin-coated pit. It localises to the cell projection. It is found in the dendrite. Its subcellular location is the axon. Its function is as follows. Multiligand endocytic receptor. Acts together with CUBN to mediate endocytosis of high-density lipoproteins. Mediates receptor-mediated uptake of polybasic drugs such as aprotinin, aminoglycosides and polymyxin B. In the kidney, mediates the tubular uptake and clearance of leptin. Also mediates transport of leptin across the blood-brain barrier through endocytosis at the choroid plexus epithelium. Endocytosis of leptin in neuronal cells is required for hypothalamic leptin signaling and leptin-mediated regulation of feeding and body weight. Mediates endocytosis and subsequent lysosomal degradation of CST3 in kidney proximal tubule cells. Mediates renal uptake of 25-hydroxyvitamin D3 in complex with the vitamin D3 transporter GC/DBP. Mediates renal uptake of metallothionein-bound heavy metals. Together with CUBN, mediates renal reabsorption of myoglobin. Mediates renal uptake and subsequent lysosomal degradation of APOM. Plays a role in kidney selenium homeostasis by mediating renal endocytosis of selenoprotein SEPP1. Mediates renal uptake of the antiapoptotic protein BIRC5/survivin which may be important for functional integrity of the kidney. Mediates renal uptake of matrix metalloproteinase MMP2 in complex with metalloproteinase inhibitor TIMP1. Mediates endocytosis of Sonic hedgehog protein N-product (ShhN), the active product of SHH. Also mediates ShhN transcytosis. In the embryonic neuroepithelium, mediates endocytic uptake and degradation of BMP4, is required for correct SHH localization in the ventral neural tube and plays a role in patterning of the ventral telencephalon. Required at the onset of neurulation to sequester SHH on the apical surface of neuroepithelial cells of the rostral diencephalon ventral midline and to control PTCH1-dependent uptake and intracellular trafficking of SHH. During neurulation, required in neuroepithelial cells for uptake of folate bound to the folate receptor FOLR1 which is necessary for neural tube closure. In the adult brain, negatively regulates BMP signaling in the subependymal zone which enables neurogenesis to proceed. In astrocytes, mediates endocytosis of ALB which is required for the synthesis of the neurotrophic factor oleic acid. Involved in neurite branching. During optic nerve development, required for SHH-mediated migration and proliferation of oligodendrocyte precursor cells. Mediates endocytic uptake and clearance of SHH in the retinal margin which protects retinal progenitor cells from mitogenic stimuli and keeps them quiescent. Plays a role in reproductive organ development by mediating uptake in reproductive tissues of androgen and estrogen bound to the sex hormone binding protein SHBG. Mediates endocytosis of angiotensin-2. Also mediates endocytosis of angiotensin 1-7. Binds to the complex composed of beta-amyloid protein 40 and CLU/APOJ and mediates its endocytosis and lysosomal degradation. Required for embryonic heart development. Required for normal hearing, possibly through interaction with estrogen in the inner ear. This chain is Low-density lipoprotein receptor-related protein 2 (Lrp2), found in Rattus norvegicus (Rat).